Here is a 201-residue protein sequence, read N- to C-terminus: MELQVVGANNALTVSETTFGREFNEALIHQVVVAYAAGARQGSRAQKTRAEVSGSGKKPWRQKGTGRARSGDIKSPIWRSGGITFAAKPQDHSQKVNKKMYRGAIKSILSELVRQDRLVVVEKFEIDAPKTKVLAQKLKDMALNDALIITASLDENLFLAARNLYKVDVRDVQGIDPVSLIAFDKVVVTVDAVKQIEEMLA.

The tract at residues 44 to 71 is disordered; that stretch reads RAQKTRAEVSGSGKKPWRQKGTGRARSG.

Belongs to the universal ribosomal protein uL4 family. Part of the 50S ribosomal subunit.

One of the primary rRNA binding proteins, this protein initially binds near the 5'-end of the 23S rRNA. It is important during the early stages of 50S assembly. It makes multiple contacts with different domains of the 23S rRNA in the assembled 50S subunit and ribosome. In terms of biological role, forms part of the polypeptide exit tunnel. The chain is Large ribosomal subunit protein uL4 from Actinobacillus succinogenes (strain ATCC 55618 / DSM 22257 / CCUG 43843 / 130Z).